Here is a 280-residue protein sequence, read N- to C-terminus: Phosphatidylglycerol--prolipoprotein diacylglyceryl transferase (280 aa).

2 consecutive transmembrane segments (helical) span residues 59 to 79 (FLTW…ILFY) and 97 to 117 (GGMS…LFTW). Arg-142 provides a ligand contact to a 1,2-diacyl-sn-glycero-3-phospho-(1'-sn-glycerol). A run of 2 helical transmembrane segments spans residues 207–227 (GFLA…CECF) and 233–253 (FIGF…PMAI).

The protein belongs to the Lgt family.

It localises to the cell inner membrane. The enzyme catalyses L-cysteinyl-[prolipoprotein] + a 1,2-diacyl-sn-glycero-3-phospho-(1'-sn-glycerol) = an S-1,2-diacyl-sn-glyceryl-L-cysteinyl-[prolipoprotein] + sn-glycerol 1-phosphate + H(+). Its pathway is protein modification; lipoprotein biosynthesis (diacylglyceryl transfer). In terms of biological role, catalyzes the transfer of the diacylglyceryl group from phosphatidylglycerol to the sulfhydryl group of the N-terminal cysteine of a prolipoprotein, the first step in the formation of mature lipoproteins. The protein is Phosphatidylglycerol--prolipoprotein diacylglyceryl transferase of Gluconacetobacter diazotrophicus (strain ATCC 49037 / DSM 5601 / CCUG 37298 / CIP 103539 / LMG 7603 / PAl5).